The sequence spans 231 residues: Uracil phosphoribosyltransferase (231 aa).

Residue 38–42 (KGLVR) coordinates GTP. Residues R87, R112, and 140 to 148 (DPMIATGST) each bind 5-phospho-alpha-D-ribose 1-diphosphate. Uracil is bound by residues I203 and 208 to 210 (GDA). Position 209 (D209) interacts with 5-phospho-alpha-D-ribose 1-diphosphate.

This sequence belongs to the UPRTase family. It depends on Mg(2+) as a cofactor.

It catalyses the reaction UMP + diphosphate = 5-phospho-alpha-D-ribose 1-diphosphate + uracil. The protein operates within pyrimidine metabolism; UMP biosynthesis via salvage pathway; UMP from uracil: step 1/1. Its activity is regulated as follows. Allosterically activated by GTP. In terms of biological role, catalyzes the conversion of uracil and 5-phospho-alpha-D-ribose 1-diphosphate (PRPP) to UMP and diphosphate. The polypeptide is Uracil phosphoribosyltransferase (Methanococcus maripaludis (strain C5 / ATCC BAA-1333)).